The primary structure comprises 100 residues: Small ribosomal subunit protein uS14c (100 aa).

The span at 28–45 (KKEIKKVPSLSEKMEIHG) shows a compositional bias: basic and acidic residues. The tract at residues 28-59 (KKEIKKVPSLSEKMEIHGKLQSPPRNSAPTRL) is disordered.

This sequence belongs to the universal ribosomal protein uS14 family. Part of the 30S ribosomal subunit.

The protein localises to the plastid. The protein resides in the chloroplast. Its function is as follows. Binds 16S rRNA, required for the assembly of 30S particles. This Nandina domestica (Heavenly bamboo) protein is Small ribosomal subunit protein uS14c.